The sequence spans 427 residues: Serine--tRNA ligase (427 aa).

Residue 231-233 (TAE) coordinates L-serine. 262 to 264 (RSE) lines the ATP pocket. E285 serves as a coordination point for L-serine. Position 349–352 (349–352 (EISS)) interacts with ATP. S385 provides a ligand contact to L-serine.

The protein belongs to the class-II aminoacyl-tRNA synthetase family. Type-1 seryl-tRNA synthetase subfamily. Homodimer. The tRNA molecule binds across the dimer.

The protein resides in the cytoplasm. It catalyses the reaction tRNA(Ser) + L-serine + ATP = L-seryl-tRNA(Ser) + AMP + diphosphate + H(+). It carries out the reaction tRNA(Sec) + L-serine + ATP = L-seryl-tRNA(Sec) + AMP + diphosphate + H(+). The protein operates within aminoacyl-tRNA biosynthesis; selenocysteinyl-tRNA(Sec) biosynthesis; L-seryl-tRNA(Sec) from L-serine and tRNA(Sec): step 1/1. Functionally, catalyzes the attachment of serine to tRNA(Ser). Is also able to aminoacylate tRNA(Sec) with serine, to form the misacylated tRNA L-seryl-tRNA(Sec), which will be further converted into selenocysteinyl-tRNA(Sec). This is Serine--tRNA ligase from Sinorhizobium medicae (strain WSM419) (Ensifer medicae).